We begin with the raw amino-acid sequence, 79 residues long: EAMZP30-47 protein (79 aa).

Positions 1 to 12 are enriched in low complexity; it reads HAASPRGRPQQR. The tract at residues 1–47 is disordered; that stretch reads HAASPRGRPQQRSSRHGAEGPDTTRRGSCCSSSSSCCRPSTPRHPHN. Residues 16 to 25 are compositionally biased toward basic and acidic residues; that stretch reads HGAEGPDTTR. The segment covering 28–37 has biased composition (low complexity); the sequence is SCCSSSSSCC.

The protein resides in the membrane. Its subcellular location is the cell membrane. It is found in the cytoplasmic vesicle. It localises to the secretory vesicle. The protein localises to the rhoptry. This chain is EAMZP30-47 protein (CMC17), found in Eimeria acervulina (Coccidian parasite).